The sequence spans 297 residues: Formylmethanofuran--tetrahydromethanopterin formyltransferase (297 aa).

It belongs to the FTR family. As to quaternary structure, homotetramer.

It localises to the cytoplasm. The enzyme catalyses N-formylmethanofuran + 5,6,7,8-tetrahydromethanopterin + H(+) = N(5)-formyl-5,6,7,8-tetrahydromethanopterin + methanofuran. The protein operates within metabolic intermediate metabolism; lactate oxidation. Functionally, catalyzes the transfer of a formyl group from 5-formyl tetrahydromethanopterin (5-formyl-H(4)MPT) to methanofuran (MFR) to produce formylmethanofuran (formyl-MFR) and tetrahydromethanopterin (H(4)MPT). The protein is Formylmethanofuran--tetrahydromethanopterin formyltransferase of Archaeoglobus fulgidus (strain ATCC 49558 / DSM 4304 / JCM 9628 / NBRC 100126 / VC-16).